Consider the following 460-residue polypeptide: Chromosomal replication initiator protein DnaA (460 aa).

Positions 1–84 (MAVSLWQQCI…RFDIGSRPSA (84 aa)) are domain I, interacts with DnaA modulators. Residues 84 to 123 (AKKPEPAPVAAVRVPNPQTKASVGTSFNTTEPVANANHRS) form a domain II region. The domain III, AAA+ region stretch occupies residues 124–340 (NINPTYQFDN…GALNRVIANA (217 aa)). ATP-binding residues include G168, G170, K171, and T172. The tract at residues 341 to 460 (NFTGRPITID…YANLIRTLSS (120 aa)) is domain IV, binds dsDNA.

The protein belongs to the DnaA family. In terms of assembly, oligomerizes as a right-handed, spiral filament on DNA at oriC.

It is found in the cytoplasm. Plays an essential role in the initiation and regulation of chromosomal replication. ATP-DnaA binds to the origin of replication (oriC) to initiate formation of the DNA replication initiation complex once per cell cycle. Binds the DnaA box (a 9 base pair repeat at the origin) and separates the double-stranded (ds)DNA. Forms a right-handed helical filament on oriC DNA; dsDNA binds to the exterior of the filament while single-stranded (ss)DNA is stabiized in the filament's interior. The ATP-DnaA-oriC complex binds and stabilizes one strand of the AT-rich DNA unwinding element (DUE), permitting loading of DNA polymerase. After initiation quickly degrades to an ADP-DnaA complex that is not apt for DNA replication. Binds acidic phospholipids. The chain is Chromosomal replication initiator protein DnaA from Shewanella sp. (strain ANA-3).